The sequence spans 292 residues: ATP synthase gamma chain (292 aa).

The protein belongs to the ATPase gamma chain family. As to quaternary structure, F-type ATPases have 2 components, CF(1) - the catalytic core - and CF(0) - the membrane proton channel. CF(1) has five subunits: alpha(3), beta(3), gamma(1), delta(1), epsilon(1). CF(0) has three main subunits: a, b and c.

The protein localises to the cell inner membrane. Its function is as follows. Produces ATP from ADP in the presence of a proton gradient across the membrane. The gamma chain is believed to be important in regulating ATPase activity and the flow of protons through the CF(0) complex. This Brucella canis (strain ATCC 23365 / NCTC 10854 / RM-666) protein is ATP synthase gamma chain.